The following is a 215-amino-acid chain: 3,4-dihydroxy-2-butanone 4-phosphate synthase (215 aa).

D-ribulose 5-phosphate-binding positions include 38 to 39 (RE), D43, 151 to 155 (RRGHT), and E175. Position 39 (E39) interacts with Mg(2+). Position 154 (H154) interacts with Mg(2+).

It belongs to the DHBP synthase family. Homodimer. Mg(2+) is required as a cofactor. The cofactor is Mn(2+).

It carries out the reaction D-ribulose 5-phosphate = (2S)-2-hydroxy-3-oxobutyl phosphate + formate + H(+). It functions in the pathway cofactor biosynthesis; riboflavin biosynthesis; 2-hydroxy-3-oxobutyl phosphate from D-ribulose 5-phosphate: step 1/1. Functionally, catalyzes the conversion of D-ribulose 5-phosphate to formate and 3,4-dihydroxy-2-butanone 4-phosphate. The polypeptide is 3,4-dihydroxy-2-butanone 4-phosphate synthase (Haemophilus influenzae (strain PittGG)).